A 138-amino-acid polypeptide reads, in one-letter code: Histone H3-like centromeric protein A (138 aa).

Residues 1-40 (MGPRRQKRKPETPRRRPASPAPAAPRPTPSLGTSSRPLAR) form a disordered region. A N,N,N-trimethylglycine modification is found at glycine 2. Serine 19 bears the Phosphoserine mark. The span at 19 to 28 (SPAPAAPRPT) shows a compositional bias: pro residues. Residues 37–52 (PLARRRHTVLKEIRTL) are important for flexibility of DNA ends that protrude from nucleosomes. Residues 39–138 (ARRRHTVLKE…RIRGIQEGLG (100 aa)) are H3-like. A CATD region spans residues 73-114 (CVQFTRGVDFNWQAQALLALQEAAEAFLVHLFEDAYLLSLHA).

The protein belongs to the histone H3 family. In terms of assembly, component of centromeric nucleosomes, where DNA is wrapped around a histone octamer core. The octamer contains two molecules each of H2A, H2B, CENPA and H4 assembled in one CENPA-H4 heterotetramer and two H2A-H2B heterodimers. CENPA modulates the DNA-binding characteristics of nucleosomes so that protruding DNA ends have higher flexibility than in nucleosomes containing conventional histone H3. Inhibits binding of histone H1 to nucleosomes, since histone H1 binds preferentially to rigid DNA linkers that protrude from nucleosomes. Nucleosomes containing CENPA also contain histone H2A variants such as MACROH2A and H2A.Z/H2AZ1. The CENPA-H4 heterotetramer is more compact and structurally more rigid than corresponding H3-H4 heterotetramers. Can assemble into nucleosomes that contain both CENPA and histone H3.3; these nucleosomes interact with a single CENPC chain. Heterotrimer composed of HJURP, CENPA and histone H4, where HJURP interacts with the dimer formed by CENPA and histone H4 and prevents tetramerization of CENPA and H4. Component of the CENPA-NAC complex, at least composed of CENPA, CENPC, CENPH, CENPM, CENPN, CENPT and CENPU. Interacts (via CATD domain) with HJURP; the interaction is direct and is required for its localization to centromeres. Interacts with CENPC, CENPN and CENPT; interaction is direct. Part of a centromere complex consisting of CENPA, CENPT and CENPW. Identified in centromere complexes containing histones H2A, H2B and H4, and at least CENPA, CENPB, CENPC, CENPT, CENPN, HJURP, SUPT16H, SSRP1 and RSF1. Can self-associate. The CENPA-H4 heterotetramer can bind DNA by itself (in vitro). Interacts with CDK1, PPP1CA and RBBP7. In terms of processing, trimethylated by NTMT1 at the N-terminal glycine after cleavage of Met-1. Methylation is low before incorporation into nucleosomes and increases with cell cycle progression, with the highest levels in mitotic nucleosomes. Post-translationally, poly-ADP-ribosylated by PARP1.

Its subcellular location is the nucleus. The protein resides in the chromosome. It localises to the centromere. Its function is as follows. Histone H3-like nucleosomal protein that is specifically found in centromeric nucleosomes. Replaces conventional H3 in the nucleosome core of centromeric chromatin that serves as an assembly site for the inner kinetochore. The presence of CENPA subtly modifies the nucleosome structure and the way DNA is wrapped around the nucleosome and gives rise to protruding DNA ends that are less well-ordered and rigid compared to nucleosomes containing histone H3. May serve as an epigenetic mark that propagates centromere identity through replication and cell division. Required for recruitment and assembly of kinetochore proteins, and as a consequence required for progress through mitosis, chromosome segregation and cytokinesis. The sequence is that of Histone H3-like centromeric protein A (CENPA) from Bos taurus (Bovine).